Reading from the N-terminus, the 109-residue chain is Thioredoxin 2 (109 aa).

The Thioredoxin domain maps to 2–109 (SGKYFEATDQ…IAKKLDEHIG (108 aa)). A disulfide bond links Cys-33 and Cys-36.

Belongs to the thioredoxin family.

In terms of biological role, participates in various redox reactions through the reversible oxidation of its active center dithiol to a disulfide and catalyzes dithiol-disulfide exchange reactions. In Chlorobaculum tepidum (strain ATCC 49652 / DSM 12025 / NBRC 103806 / TLS) (Chlorobium tepidum), this protein is Thioredoxin 2 (trx2).